A 287-amino-acid chain; its full sequence is Bifunctional protein FolD (287 aa).

NADP(+)-binding positions include 166-168 (GAS) and Ile232.

Belongs to the tetrahydrofolate dehydrogenase/cyclohydrolase family. As to quaternary structure, homodimer.

The enzyme catalyses (6R)-5,10-methylene-5,6,7,8-tetrahydrofolate + NADP(+) = (6R)-5,10-methenyltetrahydrofolate + NADPH. The catalysed reaction is (6R)-5,10-methenyltetrahydrofolate + H2O = (6R)-10-formyltetrahydrofolate + H(+). It participates in one-carbon metabolism; tetrahydrofolate interconversion. Catalyzes the oxidation of 5,10-methylenetetrahydrofolate to 5,10-methenyltetrahydrofolate and then the hydrolysis of 5,10-methenyltetrahydrofolate to 10-formyltetrahydrofolate. The polypeptide is Bifunctional protein FolD (Aeromonas hydrophila subsp. hydrophila (strain ATCC 7966 / DSM 30187 / BCRC 13018 / CCUG 14551 / JCM 1027 / KCTC 2358 / NCIMB 9240 / NCTC 8049)).